Consider the following 251-residue polypeptide: Low molecular mass lipoprotein PBMHPC-21 (251 aa).

The first 16 residues, 1–16, serve as a signal peptide directing secretion; that stretch reads MKFVVVFASCVLAVSA.

This sequence belongs to the 30 kDa lipoprotein family.

The protein resides in the secreted. This is Low molecular mass lipoprotein PBMHPC-21 from Bombyx mori (Silk moth).